The following is a 494-amino-acid chain: Glutamate--tRNA ligase (494 aa).

Positions P9–T19 match the 'HIGH' region motif. Residues K250 to R254 carry the 'KMSKS' region motif. An ATP-binding site is contributed by K253.

This sequence belongs to the class-I aminoacyl-tRNA synthetase family. Glutamate--tRNA ligase type 1 subfamily. Monomer.

It localises to the cytoplasm. It catalyses the reaction tRNA(Glu) + L-glutamate + ATP = L-glutamyl-tRNA(Glu) + AMP + diphosphate. Its function is as follows. Catalyzes the attachment of glutamate to tRNA(Glu) in a two-step reaction: glutamate is first activated by ATP to form Glu-AMP and then transferred to the acceptor end of tRNA(Glu). The protein is Glutamate--tRNA ligase of Pseudoalteromonas translucida (strain TAC 125).